Reading from the N-terminus, the 201-residue chain is Holliday junction branch migration complex subunit RuvA (201 aa).

The domain I stretch occupies residues 1–63 (MIASVRGEVL…EDSMTLYGFA (63 aa)). The tract at residues 64-142 (DTEARDLFGL…LVPVQAGPPG (79 aa)) is domain II. Positions 143 to 153 (STPAVAATPVR) are flexible linker. Residues 153 to 201 (REQVVEALTGLGFPLKQAEQALDTVLAEQPAADTSTALRAALSLLGKNR) form a domain III region.

This sequence belongs to the RuvA family. Homotetramer. Forms an RuvA(8)-RuvB(12)-Holliday junction (HJ) complex. HJ DNA is sandwiched between 2 RuvA tetramers; dsDNA enters through RuvA and exits via RuvB. An RuvB hexamer assembles on each DNA strand where it exits the tetramer. Each RuvB hexamer is contacted by two RuvA subunits (via domain III) on 2 adjacent RuvB subunits; this complex drives branch migration. In the full resolvosome a probable DNA-RuvA(4)-RuvB(12)-RuvC(2) complex forms which resolves the HJ.

The protein localises to the cytoplasm. The RuvA-RuvB-RuvC complex processes Holliday junction (HJ) DNA during genetic recombination and DNA repair, while the RuvA-RuvB complex plays an important role in the rescue of blocked DNA replication forks via replication fork reversal (RFR). RuvA specifically binds to HJ cruciform DNA, conferring on it an open structure. The RuvB hexamer acts as an ATP-dependent pump, pulling dsDNA into and through the RuvAB complex. HJ branch migration allows RuvC to scan DNA until it finds its consensus sequence, where it cleaves and resolves the cruciform DNA. The protein is Holliday junction branch migration complex subunit RuvA of Nocardia farcinica (strain IFM 10152).